A 765-amino-acid polypeptide reads, in one-letter code: Leucine-rich repeat and calponin homology domain-containing protein 2 (765 aa).

Disordered regions lie at residues methionine 1 to glycine 39 and leucine 55 to threonine 76. LRR repeat units follow at residues serine 89–leucine 110, aspartate 112–phenylalanine 133, proline 135–leucine 156, methionine 158–leucine 179, proline 180–leucine 201, aspartate 203–leucine 224, serine 226–proline 248, leucine 249–leucine 269, and histidine 271–lysine 292. The tract at residues leucine 316–glutamine 401 is disordered. Over residues serine 378 to serine 388 the composition is skewed to basic and acidic residues. The stretch at serine 438–aspartate 472 forms a coiled coil. Disordered stretches follow at residues arginine 498–glutamate 552 and lysine 565–alanine 628. A compositionally biased stretch (basic and acidic residues) spans glutamine 503–serine 512. Composition is skewed to polar residues over residues serine 518 to glutamate 529 and aspartate 584 to serine 595. The 114-residue stretch at leucine 642–proline 755 folds into the Calponin-homology (CH) domain.

May play a role in the organization of the cytoskeleton. This chain is Leucine-rich repeat and calponin homology domain-containing protein 2 (LRCH2), found in Homo sapiens (Human).